The primary structure comprises 76 residues: Large ribosomal subunit protein uL30 (76 aa).

Belongs to the universal ribosomal protein uL30 family. As to quaternary structure, part of the 50S ribosomal subunit.

The sequence is that of Large ribosomal subunit protein uL30 from Anaeromyxobacter dehalogenans (strain 2CP-1 / ATCC BAA-258).